A 1064-amino-acid chain; its full sequence is Probable ATP-dependent DNA helicase CHR23 (1064 aa).

The region spanning 398–563 is the Helicase ATP-binding domain; that stretch reads VSLYNNDYNG…WSLLNFLLPH (166 aa). 411–418 contacts ATP; it reads DEMGLGKT. The short motif at 513 to 516 is the DEAH box element; it reads DEGH. The 168-residue stretch at 699-866 folds into the Helicase C-terminal domain; sequence LLDRLLPKLK…DRREMLEEIM (168 aa). Disordered regions lie at residues 924–955 and 967–1064; these read AYTS…AVYS and MESE…SKRN. A compositionally biased stretch (acidic residues) spans 1002–1014; that stretch reads ESDEEKEEEEEER. Positions 1048–1064 are enriched in low complexity; the sequence is SSPNSRGKGSSKGSKRN.

This sequence belongs to the helicase family. In terms of tissue distribution, expressed in embryos, root apical meristem (RAM) and shoot apical meristem (SAM).

Its subcellular location is the nucleus. It catalyses the reaction ATP + H2O = ADP + phosphate + H(+). In terms of biological role, probable chromatin-remodeling factor that is functionally redundant with CHR12 in root and shoot stem cell initiation and root apical meristem (RAM) and shoot apical meristem (SAM) maintenance. Can associate with the promoter region of WOX5. May promote seed maturation and repress initiation of germination. May repress plant growth. The sequence is that of Probable ATP-dependent DNA helicase CHR23 from Arabidopsis thaliana (Mouse-ear cress).